We begin with the raw amino-acid sequence, 237 residues long: UDP-2,3-diacylglucosamine hydrolase (237 aa).

Positions 8, 10, 41, 78, and 113 each coordinate Mn(2+). 78–79 (NR) lines the substrate pocket. Residues D121, S159, Q164, and H195 each contribute to the substrate site. Mn(2+)-binding residues include H195 and H197.

It belongs to the LpxH family. Mn(2+) serves as cofactor.

The protein localises to the cell inner membrane. The catalysed reaction is UDP-2-N,3-O-bis[(3R)-3-hydroxytetradecanoyl]-alpha-D-glucosamine + H2O = 2-N,3-O-bis[(3R)-3-hydroxytetradecanoyl]-alpha-D-glucosaminyl 1-phosphate + UMP + 2 H(+). It participates in glycolipid biosynthesis; lipid IV(A) biosynthesis; lipid IV(A) from (3R)-3-hydroxytetradecanoyl-[acyl-carrier-protein] and UDP-N-acetyl-alpha-D-glucosamine: step 4/6. Its function is as follows. Hydrolyzes the pyrophosphate bond of UDP-2,3-diacylglucosamine to yield 2,3-diacylglucosamine 1-phosphate (lipid X) and UMP by catalyzing the attack of water at the alpha-P atom. Involved in the biosynthesis of lipid A, a phosphorylated glycolipid that anchors the lipopolysaccharide to the outer membrane of the cell. The sequence is that of UDP-2,3-diacylglucosamine hydrolase from Chromobacterium violaceum (strain ATCC 12472 / DSM 30191 / JCM 1249 / CCUG 213 / NBRC 12614 / NCIMB 9131 / NCTC 9757 / MK).